Reading from the N-terminus, the 513-residue chain is ATP synthase subunit alpha (513 aa).

Position 169 to 176 (G169 to T176) interacts with ATP.

Belongs to the ATPase alpha/beta chains family. F-type ATPases have 2 components, CF(1) - the catalytic core - and CF(0) - the membrane proton channel. CF(1) has five subunits: alpha(3), beta(3), gamma(1), delta(1), epsilon(1). CF(0) has three main subunits: a(1), b(2) and c(9-12). The alpha and beta chains form an alternating ring which encloses part of the gamma chain. CF(1) is attached to CF(0) by a central stalk formed by the gamma and epsilon chains, while a peripheral stalk is formed by the delta and b chains.

It localises to the cell inner membrane. It carries out the reaction ATP + H2O + 4 H(+)(in) = ADP + phosphate + 5 H(+)(out). Produces ATP from ADP in the presence of a proton gradient across the membrane. The alpha chain is a regulatory subunit. The protein is ATP synthase subunit alpha of Aeromonas salmonicida (strain A449).